The following is a 345-amino-acid chain: Phosphoribosylformylglycinamidine cyclo-ligase (345 aa).

This sequence belongs to the AIR synthase family.

The protein localises to the cytoplasm. The enzyme catalyses 2-formamido-N(1)-(5-O-phospho-beta-D-ribosyl)acetamidine + ATP = 5-amino-1-(5-phospho-beta-D-ribosyl)imidazole + ADP + phosphate + H(+). The protein operates within purine metabolism; IMP biosynthesis via de novo pathway; 5-amino-1-(5-phospho-D-ribosyl)imidazole from N(2)-formyl-N(1)-(5-phospho-D-ribosyl)glycinamide: step 2/2. The protein is Phosphoribosylformylglycinamidine cyclo-ligase of Escherichia coli O6:K15:H31 (strain 536 / UPEC).